Consider the following 82-residue polypeptide: RNA-binding protein Hfq (82 aa).

The region spanning 11–71 (DTFLNSVRKS…ISTIMPAQPV (61 aa)) is the Sm domain.

It belongs to the Hfq family. Homohexamer.

RNA chaperone that binds small regulatory RNA (sRNAs) and mRNAs to facilitate mRNA translational regulation in response to envelope stress, environmental stress and changes in metabolite concentrations. Also binds with high specificity to tRNAs. The polypeptide is RNA-binding protein Hfq (Caulobacter vibrioides (strain ATCC 19089 / CIP 103742 / CB 15) (Caulobacter crescentus)).